The primary structure comprises 38 residues: Cytochrome b559 subunit beta (38 aa).

A helical transmembrane segment spans residues 13–29 (WLAVHALAVPTVFFLGS). Histidine 17 provides a ligand contact to heme.

It belongs to the PsbE/PsbF family. Heterodimer of an alpha subunit and a beta subunit. PSII is composed of 1 copy each of membrane proteins PsbA, PsbB, PsbC, PsbD, PsbE, PsbF, PsbH, PsbI, PsbJ, PsbK, PsbL, PsbM, PsbT, PsbX, PsbY, PsbZ, Psb30/Ycf12, at least 3 peripheral proteins of the oxygen-evolving complex and a large number of cofactors. It forms dimeric complexes. The cofactor is heme b.

It is found in the plastid. It localises to the chloroplast thylakoid membrane. Functionally, this b-type cytochrome is tightly associated with the reaction center of photosystem II (PSII). PSII is a light-driven water:plastoquinone oxidoreductase that uses light energy to abstract electrons from H(2)O, generating O(2) and a proton gradient subsequently used for ATP formation. It consists of a core antenna complex that captures photons, and an electron transfer chain that converts photonic excitation into a charge separation. In Ostreococcus tauri, this protein is Cytochrome b559 subunit beta.